The primary structure comprises 293 residues: DegV domain-containing protein MG326 homolog (293 aa).

In terms of domain architecture, DegV spans 3–289; it reads TAIITDSTAS…IDAFSISLLL (287 aa). Threonine 62 and serine 94 together coordinate hexadecanoate.

Functionally, may bind long-chain fatty acids, such as palmitate, and may play a role in lipid transport or fatty acid metabolism. The polypeptide is DegV domain-containing protein MG326 homolog (Mycoplasma pneumoniae (strain ATCC 29342 / M129 / Subtype 1) (Mycoplasmoides pneumoniae)).